The primary structure comprises 345 residues: GTP 3',8-cyclase (345 aa).

The Radical SAM core domain maps to 10-236 (SHGRPLGVLR…QCVSSHWPLD (227 aa)). Arg19 is a binding site for GTP. Positions 26 and 30 each coordinate [4Fe-4S] cluster. S-adenosyl-L-methionine is bound at residue Tyr32. Cys33 is a binding site for [4Fe-4S] cluster. Arg65 serves as a coordination point for GTP. Residue Gly69 coordinates S-adenosyl-L-methionine. Thr98 is a binding site for GTP. An S-adenosyl-L-methionine-binding site is contributed by Ser123. Lys172 provides a ligand contact to GTP. Residue Met206 participates in S-adenosyl-L-methionine binding. Positions 269 and 272 each coordinate [4Fe-4S] cluster. 274-276 (RIR) provides a ligand contact to GTP. Residue Cys286 coordinates [4Fe-4S] cluster.

It belongs to the radical SAM superfamily. MoaA family. In terms of assembly, monomer and homodimer. The cofactor is [4Fe-4S] cluster.

It catalyses the reaction GTP + AH2 + S-adenosyl-L-methionine = (8S)-3',8-cyclo-7,8-dihydroguanosine 5'-triphosphate + 5'-deoxyadenosine + L-methionine + A + H(+). Its pathway is cofactor biosynthesis; molybdopterin biosynthesis. Its function is as follows. Catalyzes the cyclization of GTP to (8S)-3',8-cyclo-7,8-dihydroguanosine 5'-triphosphate. The sequence is that of GTP 3',8-cyclase from Synechococcus sp. (strain CC9902).